An 82-amino-acid chain; its full sequence is Small ribosomal subunit protein bS16 (82 aa).

The protein belongs to the bacterial ribosomal protein bS16 family.

This is Small ribosomal subunit protein bS16 from Dehalococcoides mccartyi (strain ATCC BAA-2100 / JCM 16839 / KCTC 5957 / BAV1).